A 156-amino-acid chain; its full sequence is ATP synthase subunit b (156 aa).

The chain crosses the membrane as a helical span at residues 5–25 (LTLIVQMLVFAAFVLFTMKLV).

It belongs to the ATPase B chain family. As to quaternary structure, F-type ATPases have 2 components, F(1) - the catalytic core - and F(0) - the membrane proton channel. F(1) has five subunits: alpha(3), beta(3), gamma(1), delta(1), epsilon(1). F(0) has three main subunits: a(1), b(2) and c(10-14). The alpha and beta chains form an alternating ring which encloses part of the gamma chain. F(1) is attached to F(0) by a central stalk formed by the gamma and epsilon chains, while a peripheral stalk is formed by the delta and b chains.

Its subcellular location is the cell inner membrane. F(1)F(0) ATP synthase produces ATP from ADP in the presence of a proton or sodium gradient. F-type ATPases consist of two structural domains, F(1) containing the extramembraneous catalytic core and F(0) containing the membrane proton channel, linked together by a central stalk and a peripheral stalk. During catalysis, ATP synthesis in the catalytic domain of F(1) is coupled via a rotary mechanism of the central stalk subunits to proton translocation. Its function is as follows. Component of the F(0) channel, it forms part of the peripheral stalk, linking F(1) to F(0). This Legionella pneumophila (strain Paris) protein is ATP synthase subunit b.